Here is a 304-residue protein sequence, read N- to C-terminus: Probable 5-dehydro-4-deoxyglucarate dehydratase (304 aa).

It belongs to the DapA family.

It catalyses the reaction 5-dehydro-4-deoxy-D-glucarate + H(+) = 2,5-dioxopentanoate + CO2 + H2O. It functions in the pathway carbohydrate acid metabolism; D-glucarate degradation; 2,5-dioxopentanoate from D-glucarate: step 2/2. The sequence is that of Probable 5-dehydro-4-deoxyglucarate dehydratase from Rhodococcus jostii (strain RHA1).